Here is a 1333-residue protein sequence, read N- to C-terminus: Aldehyde oxidase 1 (1333 aa).

One can recognise a 2Fe-2S ferredoxin-type domain in the interval 4 to 91 (PQLLFYVNGQ…GTAVTTVEGI (88 aa)). Positions 43, 48, 51, and 73 each coordinate [2Fe-2S] cluster. Gln112 is a Mo-molybdopterin binding site. [2Fe-2S] cluster-binding residues include Cys113, Cys116, Cys148, and Cys150. Mo-molybdopterin is bound at residue Cys150. Residues 235-420 (FYSNRMTWIS…VSVNIPCSRK (186 aa)) enclose the FAD-binding PCMH-type domain. Residues 263 to 270 (IVMGYTSV), Ala344, Ser353, His357, Asp366, and Leu410 each bind FAD. Mo-molybdopterin is bound by residues 801–802 (AF) and Met1042. The residue at position 1063 (Ser1063) is a Phosphoserine. Residues 1083–1086 (GSVV), Gln1198, and Leu1263 each bind Mo-molybdopterin. The active-site Proton acceptor; for azaheterocycle hydroxylase activity is Glu1265.

It belongs to the xanthine dehydrogenase family. Homodimer. Requires [2Fe-2S] cluster as cofactor. It depends on FAD as a cofactor. Mo-molybdopterin serves as cofactor. The N-terminus is blocked. Expression in liver (at protein level). Also detected in heart, lung, spleen and kidney.

It localises to the cytoplasm. The catalysed reaction is an aldehyde + O2 + H2O = a carboxylate + H2O2 + H(+). It carries out the reaction retinal + O2 + H2O = retinoate + H2O2 + H(+). With respect to regulation, inhibited by menadione and isovanillin. Not inhibited by allopurinol, a xanthine dehydrogenase potent inhibitor. Inhibited by the flavonoids quercetin, myricetin and genistein. Nitric oxide generation is inhibited by raloxifene and competitively inhibited by an increase in oxygen levels. Functionally, oxidase with broad substrate specificity, oxidizing aromatic azaheterocycles, such as N1-methylnicotinamide, N-methylphthalazinium and phthalazine, as well as aldehydes, such as benzaldehyde, retinal, pyridoxal, and vanillin. Plays a role in the metabolism of xenobiotics and drugs containing aromatic azaheterocyclic substituents. Participates in the bioactivation of prodrugs such as famciclovir, catalyzing the oxidation step from 6-deoxypenciclovir to penciclovir, which is a potent antiviral agent. Is probably involved in the regulation of reactive oxygen species homeostasis. Is a prominent source of superoxide generation via the one-electron reduction of molecular oxygen. Also catalyzes nitric oxide (NO) production; under anaerobic conditions, reduces nitrite to NO with NADH or aldehyde as electron donor, but under aerobic conditions, NADH is the preferred substrate. These reactions may be catalyzed by several isozymes. May play a role in adipogenesis. This chain is Aldehyde oxidase 1, found in Rattus norvegicus (Rat).